We begin with the raw amino-acid sequence, 168 residues long: UPF0478 protein SH1183 (168 aa).

Residues 7 to 27 (IAGIIAAIAFLVLCIGIVVVL) form a helical membrane-spanning segment. The disordered stretch occupies residues 144–168 (YRNTSVGNDANHSNENYTTNVEKNF).

This sequence belongs to the UPF0478 family.

The protein resides in the cell membrane. In Staphylococcus haemolyticus (strain JCSC1435), this protein is UPF0478 protein SH1183.